Consider the following 267-residue polypeptide: MSDILQKILAVKADEVAAARKRRDLPSLRAEAESLRSEAGLAPRGFERALRDKIAAGHAAVIAEIKKASPSKGVLREQFLPEAIAESYATHGAACLSVLTDEHFFQGHADYLKRARGACPLPALRKDFMVDLYQVYEARTWGADCILLIVAALDHGLMAELEACALELGMDVLVEVHGDDELEAALRLKTPLLGVNNRNLRTFEVSLDNTLDLLPHIPADKLVVTESGILAPADVKRMRDANVHAFLVGEAFMRAKEPGVELARLFG.

It belongs to the TrpC family.

The catalysed reaction is 1-(2-carboxyphenylamino)-1-deoxy-D-ribulose 5-phosphate + H(+) = (1S,2R)-1-C-(indol-3-yl)glycerol 3-phosphate + CO2 + H2O. It functions in the pathway amino-acid biosynthesis; L-tryptophan biosynthesis; L-tryptophan from chorismate: step 4/5. The protein is Indole-3-glycerol phosphate synthase of Cupriavidus taiwanensis (strain DSM 17343 / BCRC 17206 / CCUG 44338 / CIP 107171 / LMG 19424 / R1) (Ralstonia taiwanensis (strain LMG 19424)).